Consider the following 255-residue polypeptide: Microfibril-associated glycoprotein 4 (255 aa).

A signal peptide spans M1–P20. The Cell attachment site signature appears at R26–D28. A Fibrinogen C-terminal domain is found at K32 to A255. N87 and N137 each carry an N-linked (GlcNAc...) asparagine glycan.

As to quaternary structure, homodimer. Can also form higher oligomers. Interacts with FBN1, FBN2 and LOX. Interacts with COL1A1 in a Ca (2+)-dependent manner. Interacts with ELN in a Ca (2+)-dependent manner; this interaction promotes ELN self-assembly.

It localises to the secreted. The protein localises to the extracellular space. The protein resides in the extracellular matrix. Functionally, could be involved in calcium-dependent cell adhesion or intercellular interactions. May contribute to the elastic fiber assembly and/or maintenance. This Bos taurus (Bovine) protein is Microfibril-associated glycoprotein 4 (MFAP4).